Here is a 176-residue protein sequence, read N- to C-terminus: Peptide deformylase (176 aa).

2 residues coordinate Fe cation: Cys-94 and His-136. Glu-137 is an active-site residue. His-140 contacts Fe cation.

Belongs to the polypeptide deformylase family. Fe(2+) is required as a cofactor.

The enzyme catalyses N-terminal N-formyl-L-methionyl-[peptide] + H2O = N-terminal L-methionyl-[peptide] + formate. Removes the formyl group from the N-terminal Met of newly synthesized proteins. Requires at least a dipeptide for an efficient rate of reaction. N-terminal L-methionine is a prerequisite for activity but the enzyme has broad specificity at other positions. The protein is Peptide deformylase of Bartonella henselae (strain ATCC 49882 / DSM 28221 / CCUG 30454 / Houston 1) (Rochalimaea henselae).